We begin with the raw amino-acid sequence, 101 residues long: Protein S100-A4 (101 aa).

A2 is modified (N-acetylalanine). The residue at position 7 (K7) is an N6-acetyllysine. EF-hand domains are found at residues 12 to 47 (MVST…SFLG) and 50 to 85 (TDEA…IAMM). K28 and E33 together coordinate Ca(2+). Position 35 is an N6-acetyllysine (K35). Ca(2+) is bound by residues D63, N65, D67, E69, and E74.

This sequence belongs to the S-100 family. In terms of assembly, homodimer. Interacts with PPFIBP1 in a calcium-dependent mode. Interacts with PGLYRP1; this complex acts as a chemoattractant that promotes lymphocyte movement. Interacts with MYH9; this interaction increases cell motility. Interacts with Annexin 2/ANXA2. Interacts with TP53; this interaction promotes TP53 degradation. Interacts with CCR5. Interacts with FCGR3A; this interaction inhibits PKC-dependent phosphorylation of FCGR3A. Ubiquitously expressed.

It is found in the secreted. The protein localises to the nucleus. It localises to the cytoplasm. Functionally, calcium-binding protein that plays a role in various cellular processes including motility, angiogenesis, cell differentiation, apoptosis, and autophagy. Increases cell motility and invasiveness by interacting with non-muscle myosin heavy chain (NMMHC) IIA/MYH9. Mechanistically, promotes filament depolymerization and increases the amount of soluble myosin-IIA, resulting in the formation of stable protrusions facilitating chemotaxis. Also modulates the pro-apoptotic function of TP53 by binding to its C-terminal transactivation domain within the nucleus and reducing its protein levels. Within the extracellular space, stimulates cytokine production including granulocyte colony-stimulating factor and CCL24 from T-lymphocytes. In addition, stimulates T-lymphocyte chemotaxis by acting as a chemoattractant complex with PGLYRP1 that promotes lymphocyte migration via CCR5 and CXCR3 receptors. This chain is Protein S100-A4 (S100A4), found in Homo sapiens (Human).